The primary structure comprises 565 residues: Sulfite reductase [NADPH] hemoprotein beta-component (565 aa).

[4Fe-4S] cluster is bound by residues cysteine 429, cysteine 435, cysteine 474, and cysteine 478. Cysteine 478 is a binding site for siroheme.

The protein belongs to the nitrite and sulfite reductase 4Fe-4S domain family. In terms of assembly, alpha(8)-beta(8). The alpha component is a flavoprotein, the beta component is a hemoprotein. Siroheme is required as a cofactor. Requires [4Fe-4S] cluster as cofactor.

The enzyme catalyses hydrogen sulfide + 3 NADP(+) + 3 H2O = sulfite + 3 NADPH + 4 H(+). Its pathway is sulfur metabolism; hydrogen sulfide biosynthesis; hydrogen sulfide from sulfite (NADPH route): step 1/1. Its function is as follows. Component of the sulfite reductase complex that catalyzes the 6-electron reduction of sulfite to sulfide. This is one of several activities required for the biosynthesis of L-cysteine from sulfate. In Shewanella oneidensis (strain ATCC 700550 / JCM 31522 / CIP 106686 / LMG 19005 / NCIMB 14063 / MR-1), this protein is Sulfite reductase [NADPH] hemoprotein beta-component.